A 461-amino-acid polypeptide reads, in one-letter code: Acetylornithine aminotransferase, mitochondrial (461 aa).

Positions 36 to 56 (YATASQLTHPDPTEDSPSGKM) are disordered. Residue K312 is modified to N6-(pyridoxal phosphate)lysine.

This sequence belongs to the class-III pyridoxal-phosphate-dependent aminotransferase family. Requires pyridoxal 5'-phosphate as cofactor.

Its subcellular location is the mitochondrion matrix. It carries out the reaction N(2)-acetyl-L-ornithine + 2-oxoglutarate = N-acetyl-L-glutamate 5-semialdehyde + L-glutamate. Its pathway is amino-acid biosynthesis; L-arginine biosynthesis; N(2)-acetyl-L-ornithine from L-glutamate: step 4/4. The protein is Acetylornithine aminotransferase, mitochondrial (arg-8) of Neurospora crassa (strain ATCC 24698 / 74-OR23-1A / CBS 708.71 / DSM 1257 / FGSC 987).